Reading from the N-terminus, the 573-residue chain is Dihydroxy-acid dehydratase (573 aa).

A compositionally biased stretch (basic and acidic residues) spans 1–14 (MTEKSPKPHKRSDA). A disordered region spans residues 1 to 21 (MTEKSPKPHKRSDAITEGPNR). A [2Fe-2S] cluster-binding site is contributed by Cys-55. Asp-87 contacts Mg(2+). [2Fe-2S] cluster is bound at residue Cys-128. Residues Asp-129 and Lys-130 each contribute to the Mg(2+) site. Lys-130 carries the post-translational modification N6-carboxylysine. Residue Cys-200 coordinates [2Fe-2S] cluster. Glu-450 serves as a coordination point for Mg(2+). The active-site Proton acceptor is Ser-476.

This sequence belongs to the IlvD/Edd family. In terms of assembly, homodimer. [2Fe-2S] cluster is required as a cofactor. It depends on Mg(2+) as a cofactor.

The enzyme catalyses (2R)-2,3-dihydroxy-3-methylbutanoate = 3-methyl-2-oxobutanoate + H2O. The catalysed reaction is (2R,3R)-2,3-dihydroxy-3-methylpentanoate = (S)-3-methyl-2-oxopentanoate + H2O. It functions in the pathway amino-acid biosynthesis; L-isoleucine biosynthesis; L-isoleucine from 2-oxobutanoate: step 3/4. Its pathway is amino-acid biosynthesis; L-valine biosynthesis; L-valine from pyruvate: step 3/4. Functionally, functions in the biosynthesis of branched-chain amino acids. Catalyzes the dehydration of (2R,3R)-2,3-dihydroxy-3-methylpentanoate (2,3-dihydroxy-3-methylvalerate) into 2-oxo-3-methylpentanoate (2-oxo-3-methylvalerate) and of (2R)-2,3-dihydroxy-3-methylbutanoate (2,3-dihydroxyisovalerate) into 2-oxo-3-methylbutanoate (2-oxoisovalerate), the penultimate precursor to L-isoleucine and L-valine, respectively. This chain is Dihydroxy-acid dehydratase, found in Koribacter versatilis (strain Ellin345).